A 202-amino-acid polypeptide reads, in one-letter code: Myosin regulatory light chain 10 (202 aa).

A disordered region spans residues 1–21; it reads MGQSSLDHGVQGPVAGTGDFG. 3 EF-hand domains span residues 60–95, 130–165, and 166–201; these read SQIQ…LGRI, DPEE…QADR, and FSEE…GEEK. The Ca(2+) site is built by aspartate 73, asparagine 75, aspartate 77, and aspartate 84.

In terms of assembly, myosin is a hexamer of 2 heavy chains and 4 light chains. In terms of tissue distribution, specifically expressed in precursor B- and T-lymphocytes.

The chain is Myosin regulatory light chain 10 (Myl10) from Mus musculus (Mouse).